The primary structure comprises 1762 residues: Lysine-specific demethylase 3B (1762 aa).

N-acetylalanine is present on Ala-2. Disordered regions lie at residues 253 to 350 and 426 to 468; these read MDSS…FVPQ and TTAS…NSSL. The segment covering 299–310 has biased composition (basic and acidic residues); the sequence is ATKKLKGDRGEV. Over residues 426-435 the composition is skewed to low complexity; sequence TTASSTPTTV. Over residues 453–465 the composition is skewed to polar residues; that stretch reads GSWSQASGENSRN. 4 positions are modified to phosphoserine: Ser-493, Ser-547, Ser-557, and Ser-561. The disordered stretch occupies residues 574–613; that stretch reads SVLGADTQPGPKAGSSVDRKVPAESMPTLTPAFPRSLLNT. Thr-615 is subject to Phosphothreonine. Polar residues predominate over residues 713-746; the sequence is TGSPSLSAVGNGRSSSPTNSLTQPIEMPTLSSSP. Positions 713–763 are disordered; that stretch reads TGSPSLSAVGNGRSSSPTNSLTQPIEMPTLSSSPTEERPTVGPGQQDNPLL. 3 positions are modified to phosphoserine: Ser-767, Ser-774, and Ser-779. A Glycyl lysine isopeptide (Lys-Gly) (interchain with G-Cter in SUMO2) cross-link involves residue Lys-789. Ser-799 is subject to Phosphoserine. The interval 806-853 is disordered; it reads ACRQDSDSSTNSDLSDLSDSEEQLQAKSGLKGIPEHLMGKLGPNGERS. Residues 1032 to 1057 form a C6-type zinc finger; sequence CDVCETTLFNIHWVCRKCGFGVCLDC. Positions 1146–1163 are enriched in polar residues; sequence QLPSVTPSASSGNETTFS. A disordered region spans residues 1146-1217; that stretch reads QLPSVTPSAS…AIRPPCPDTA (72 aa). Ser-1254 and Ser-1260 each carry phosphoserine. Positions 1285–1306 are disordered; it reads SNSKTEGSSLRDLLHSGPGKLP. The LXXLL motif motif lies at 1294 to 1298; sequence LRDLL. The region spanning 1499 to 1722 is the JmjC domain; it reads MPTRFEDLME…HCFRLTQEFR (224 aa). Fe cation-binding residues include His-1561, Asp-1563, and His-1690.

Belongs to the JHDM2 histone demethylase family. It depends on Fe(2+) as a cofactor.

The protein resides in the nucleus. The enzyme catalyses N(6),N(6)-dimethyl-L-lysyl(9)-[histone H3] + 2 2-oxoglutarate + 2 O2 = L-lysyl(9)-[histone H3] + 2 formaldehyde + 2 succinate + 2 CO2. Functionally, histone demethylase that specifically demethylates 'Lys-9' of histone H3, thereby playing a central role in histone code. Demethylation of Lys residue generates formaldehyde and succinate May have tumor suppressor activity. This Mus musculus (Mouse) protein is Lysine-specific demethylase 3B (Kdm3b).